The following is a 182-amino-acid chain: ATP synthase subunit delta (182 aa).

This sequence belongs to the ATPase delta chain family. F-type ATPases have 2 components, F(1) - the catalytic core - and F(0) - the membrane proton channel. F(1) has five subunits: alpha(3), beta(3), gamma(1), delta(1), epsilon(1). CF(0) has four main subunits: a(1), b(1), b'(1) and c(10-14). The alpha and beta chains form an alternating ring which encloses part of the gamma chain. F(1) is attached to F(0) by a central stalk formed by the gamma and epsilon chains, while a peripheral stalk is formed by the delta, b and b' chains.

The protein localises to the cellular thylakoid membrane. Its function is as follows. F(1)F(0) ATP synthase produces ATP from ADP in the presence of a proton or sodium gradient. F-type ATPases consist of two structural domains, F(1) containing the extramembraneous catalytic core and F(0) containing the membrane proton channel, linked together by a central stalk and a peripheral stalk. During catalysis, ATP synthesis in the catalytic domain of F(1) is coupled via a rotary mechanism of the central stalk subunits to proton translocation. Functionally, this protein is part of the stalk that links CF(0) to CF(1). It either transmits conformational changes from CF(0) to CF(1) or is implicated in proton conduction. This Synechococcus sp. (strain CC9902) protein is ATP synthase subunit delta.